A 400-amino-acid polypeptide reads, in one-letter code: General L-amino acid transport system permease protein AapQ (400 aa).

8 helical membrane-spanning segments follow: residues 29-49 (SIFY…WVAH), 100-120 (LLVA…IGIG), 142-162 (IPPL…LPQP), 188-208 (TGMI…IIIA), 225-245 (VWTA…VSGF), 264-284 (VVGP…ASFI), 340-360 (NSSL…GTIL), and 367-387 (IEIV…TSLF). Residues 96–388 (ILNTLLVAVT…SLSILTSLFM (293 aa)) enclose the ABC transmembrane type-1 domain.

Belongs to the binding-protein-dependent transport system permease family. HisMQ subfamily.

The protein resides in the cell inner membrane. Its function is as follows. Part of a binding-protein-dependent transport system for L-amino acids, affects the uptake as well as efflux of these amino acids. Probably responsible for the translocation of the substrate across the membrane. The chain is General L-amino acid transport system permease protein AapQ (aapQ) from Rhizobium johnstonii (strain DSM 114642 / LMG 32736 / 3841) (Rhizobium leguminosarum bv. viciae).